Consider the following 238-residue polypeptide: Ribosomal RNA large subunit methyltransferase E (238 aa).

Residues G85, W87, D113, D129, and D153 each coordinate S-adenosyl-L-methionine. K193 (proton acceptor) is an active-site residue.

The protein belongs to the class I-like SAM-binding methyltransferase superfamily. RNA methyltransferase RlmE family.

The protein localises to the cytoplasm. It catalyses the reaction uridine(2552) in 23S rRNA + S-adenosyl-L-methionine = 2'-O-methyluridine(2552) in 23S rRNA + S-adenosyl-L-homocysteine + H(+). Specifically methylates the uridine in position 2552 of 23S rRNA at the 2'-O position of the ribose in the fully assembled 50S ribosomal subunit. The protein is Ribosomal RNA large subunit methyltransferase E of Ruegeria sp. (strain TM1040) (Silicibacter sp.).